The following is a 107-amino-acid chain: N(4)-acetylcytidine amidohydrolase (107 aa).

The region spanning 9-105 (TFFEFLTPLI…KLFVIEYELI (97 aa)) is the ASCH domain. The active-site Proton acceptor is the Lys23. The Nucleophile role is filled by Thr26. Glu76 (proton donor) is an active-site residue.

The protein belongs to the N(4)-acetylcytidine amidohydrolase family.

The catalysed reaction is N(4)-acetylcytidine + H2O = cytidine + acetate + H(+). The enzyme catalyses N(4)-acetyl-2'-deoxycytidine + H2O = 2'-deoxycytidine + acetate + H(+). It carries out the reaction N(4)-acetylcytosine + H2O = cytosine + acetate + H(+). In terms of biological role, catalyzes the hydrolysis of N(4)-acetylcytidine (ac4C). The chain is N(4)-acetylcytidine amidohydrolase from Vibrio parahaemolyticus serotype O3:K6 (strain RIMD 2210633).